A 435-amino-acid chain; its full sequence is GTPase Der (435 aa).

EngA-type G domains follow at residues 4-167 and 175-350; these read KIVA…SKND and TKIA…QSLS. Residues 10-17, 57-61, 119-122, 181-188, 228-232, and 293-296 each bind GTP; these read GRPNVGKS, DTGGI, NKYD, DTAGI, and NKWD. A KH-like domain is found at 351 to 435; the sequence is VKVKTYVLNE…PINLIFRERK (85 aa).

It belongs to the TRAFAC class TrmE-Era-EngA-EngB-Septin-like GTPase superfamily. EngA (Der) GTPase family. In terms of assembly, associates with the 50S ribosomal subunit.

Its function is as follows. GTPase that plays an essential role in the late steps of ribosome biogenesis. The chain is GTPase Der from Mycoplasma mycoides subsp. mycoides SC (strain CCUG 32753 / NCTC 10114 / PG1).